A 192-amino-acid chain; its full sequence is Ferritin-like protein (192 aa).

His-44, Glu-48, and His-102 together coordinate Fe(3+). The tract at residues 143 to 179 is linker; sequence RFDHDYADPHAHHDEHRDHLADMPSAGSSHEEVQPVA. Residues 149–163 show a composition bias toward basic and acidic residues; that stretch reads ADPHAHHDEHRDHLA. Residues 149–192 form a disordered region; the sequence is ADPHAHHDEHRDHLADMPSAGSSHEEVQPVAHKKKGFTVGSLIQ. The targeting peptide stretch occupies residues 180–192; that stretch reads HKKKGFTVGSLIQ.

As to quaternary structure, homodimer, with 2 Fe atoms bound at the subunit interface (without encapsulin), probably also a dimer when encapsulated. 42 electron-dense accretions can be seen inside the nanocompartment which are probably this cargo protein, although perhaps up to one cargo dimer can be bound per shell protein.

It is found in the encapsulin nanocompartment. The catalysed reaction is 4 Fe(2+) + O2 + 4 H(+) = 4 Fe(3+) + 2 H2O. Functionally, cargo protein of a type 1 encapsulin nanocompartment. A ferritin-like iron-binding protein probably involved in iron mineralization in the encapsulin nanocompartment. Has ferroxidase activity even when encapsulated, the rate is probably controlled by the rate of Fe flux across the nanocompartment pores. Part of the iron-mineralizing encapsulin-associated Firmicute (IMEF) system. 2 different cargo proteins have been identified (IMEF and Fer); when both are expressed in E.coli with the shell protein only IMEF is detected within the nanocompartment. E.coli expressing all 3 genes stores the largest amount of iron and is protected from Fe/H2O2-induced oxidative stress. The protein is Ferritin-like protein of Bacillus thermotolerans (Quasibacillus thermotolerans).